The sequence spans 606 residues: Alpha-1,2-mannosyltransferase MNN23 (606 aa).

Residues 1–14 (MSINFLSIPRNRFK) are Cytoplasmic-facing. The helical transmembrane segment at 15–35 (AIGVLSVTCILIYVILHSSII) threads the bilayer. Topologically, residues 36–606 (TTDFDVSDYG…QVAWLSKSQN (571 aa)) are extracellular. A disordered region spans residues 59–86 (DNGENLKDPQPELDNDKGNGETDTTTSN). The segment covering 62-78 (ENLKDPQPELDNDKGNG) has biased composition (basic and acidic residues).

This sequence belongs to the MNN1/MNT family.

Its subcellular location is the golgi apparatus membrane. Its pathway is protein modification; protein glycosylation. Its function is as follows. Alpha-1,2-mannosyltransferase required for cell wall integrity. Responsible for addition of the first alpha-1,2-linked mannose to form the branches on the mannan backbone of oligosaccharides. Addition of alpha-1,2-mannose is required for stabilization of the alpha-1,6-mannose backbone and hence regulates mannan fibril length; and is important for both immune recognition and virulence. The sequence is that of Alpha-1,2-mannosyltransferase MNN23 (MNN23) from Candida albicans (strain SC5314 / ATCC MYA-2876) (Yeast).